A 405-amino-acid polypeptide reads, in one-letter code: Cytoplasmic tRNA 2-thiolation protein 2 (405 aa).

The protein belongs to the CTU2/NCS2 family.

The protein resides in the cytoplasm. Its pathway is tRNA modification; 5-methoxycarbonylmethyl-2-thiouridine-tRNA biosynthesis. Plays a central role in 2-thiolation of mcm(5)S(2)U at tRNA wobble positions of tRNA(Lys), tRNA(Glu) and tRNA(Gln). May act by forming a heterodimer with NCS6/CTU1 that ligates sulfur from thiocarboxylated URM1 onto the uridine of tRNAs at wobble position. The polypeptide is Cytoplasmic tRNA 2-thiolation protein 2 (Drosophila melanogaster (Fruit fly)).